A 679-amino-acid polypeptide reads, in one-letter code: Genome polyprotein (679 aa).

The propeptide at 1-14 is ER anchor for the capsid protein C, removed in mature form by serine protease NS3; sequence SAGMIIMLIPTVMA. The helical transmembrane segment at 2 to 22 threads the bilayer; that stretch reads AGMIIMLIPTVMAFHLTTRNG. Over 23–138 the chain is Extracellular; it reads EPHMIVSRQE…GAWKHAQRIE (116 aa). Asn83 carries an N-linked (GlcNAc...) asparagine; by host glycan. The helical transmembrane segment at 139–159 threads the bilayer; sequence IWILRHPGFTIMAAILAYTIG. Residues 160–165 are Cytoplasmic-facing; the sequence is TTHFQR. The helical transmembrane segment at 166–180 threads the bilayer; that stretch reads ALIFILLTAVAPSMT. The Extracellular portion of the chain corresponds to 181 to 625; that stretch reads MRCIGISNRD…LHQVFGAIYG (445 aa). 4 disulfides stabilise this stretch: Cys183–Cys210, Cys240–Cys301, Cys254–Cys285, and Cys272–Cys296. The N-linked (GlcNAc...) asparagine; by host glycan is linked to Asn247. Positions 278 to 291 are fusion peptide; it reads DRGWGNGCGLFGKG. N-linked (GlcNAc...) asparagine; by host glycosylation is present at Asn333. Intrachain disulfides connect Cys365/Cys465 and Cys482/Cys513. A helical membrane pass occupies residues 626 to 646; sequence AAFSGVSWTMKILIGVIITWI. Topologically, residues 647-652 are cytoplasmic; it reads GMNSRS. Residues 653–673 form a helical membrane-spanning segment; it reads TSLSVSLVLVGIVTLYLGVMV. Topologically, residues 674–679 are extracellular; it reads QADSGC.

As to quaternary structure, forms heterodimers with envelope protein E in the endoplasmic reticulum and Golgi. Homodimer; in the endoplasmic reticulum and Golgi. Interacts with protein prM. Interacts with non-structural protein 1. Post-translationally, cleaved in post-Golgi vesicles by a host furin, releasing the mature small envelope protein M, and peptide pr. This cleavage is incomplete as up to 30% of viral particles still carry uncleaved prM. N-glycosylated. In terms of processing, N-glycosylated. The excreted form is glycosylated and this is required for efficient secretion of the protein from infected cells. Post-translationally, specific enzymatic cleavages in vivo yield mature proteins. Cleavages in the lumen of endoplasmic reticulum are performed by host signal peptidase, wereas cleavages in the cytoplasmic side are performed by serine protease NS3. Signal cleavage at the 2K-4B site requires a prior NS3 protease-mediated cleavage at the 4A-2K site.

It is found in the secreted. Its subcellular location is the virion membrane. It localises to the host endoplasmic reticulum membrane. Its function is as follows. Prevents premature fusion activity of envelope proteins in trans-Golgi by binding to envelope protein E at pH6.0. After virion release in extracellular space, gets dissociated from E dimers. Functionally, acts as a chaperone for envelope protein E during intracellular virion assembly by masking and inactivating envelope protein E fusion peptide. prM is the only viral peptide matured by host furin in the trans-Golgi network probably to avoid catastrophic activation of the viral fusion activity in acidic Golgi compartment prior to virion release. prM-E cleavage is inefficient, and many virions are only partially matured. These uncleaved prM would play a role in immune evasion. In terms of biological role, may play a role in virus budding. Exerts cytotoxic effects by activating a mitochondrial apoptotic pathway through M ectodomain. May display a viroporin activity. Binds to host cell surface receptor and mediates fusion between viral and cellular membranes. Envelope protein is synthesized in the endoplasmic reticulum in the form of heterodimer with protein prM. They play a role in virion budding in the ER, and the newly formed immature particle is covered with 60 spikes composed of heterodimer between precursor prM and envelope protein E. The virion is transported to the Golgi apparatus where the low pH causes dissociation of PrM-E heterodimers and formation of E homodimers. prM-E cleavage is inefficient, and many virions are only partially matured. These uncleaved prM would play a role in immune evasion. Its function is as follows. Involved in immune evasion, pathogenesis and viral replication. Once cleaved off the polyprotein, is targeted to three destinations: the viral replication cycle, the plasma membrane and the extracellular compartment. Essential for viral replication. Required for formation of the replication complex and recruitment of other non-structural proteins to the ER-derived membrane structures. Excreted as a hexameric lipoparticle that plays a role against host immune response. Antagonizing the complement function. Binds to the host macrophages and dendritic cells. Inhibits signal transduction originating from Toll-like receptor 3 (TLR3). Functionally, disrupts the host endothelial glycocalyx layer of host pulmonary microvascular endothelial cells, inducing degradation of sialic acid and shedding of heparan sulfate proteoglycans. NS1 induces expression of sialidases, heparanase, and activates cathepsin L, which activates heparanase via enzymatic cleavage. These effects are probably linked to the endothelial hyperpermeability observed in severe dengue disease. The chain is Genome polyprotein from Dengue virus type 2 (strain Thailand/PUO-218/1980) (DENV-2).